The sequence spans 159 residues: Cyclic pyranopterin monophosphate synthase (159 aa).

Residues 75–77 (LCH) and 113–114 (ME) contribute to the substrate site. Asp128 is an active-site residue.

It belongs to the MoaC family. As to quaternary structure, homohexamer; trimer of dimers.

The catalysed reaction is (8S)-3',8-cyclo-7,8-dihydroguanosine 5'-triphosphate = cyclic pyranopterin phosphate + diphosphate. Its pathway is cofactor biosynthesis; molybdopterin biosynthesis. In terms of biological role, catalyzes the conversion of (8S)-3',8-cyclo-7,8-dihydroguanosine 5'-triphosphate to cyclic pyranopterin monophosphate (cPMP). This Aliivibrio fischeri (strain MJ11) (Vibrio fischeri) protein is Cyclic pyranopterin monophosphate synthase.